We begin with the raw amino-acid sequence, 483 residues long: Aspartyl/glutamyl-tRNA(Asn/Gln) amidotransferase subunit B (483 aa).

This sequence belongs to the GatB/GatE family. GatB subfamily. As to quaternary structure, heterotrimer of A, B and C subunits.

It catalyses the reaction L-glutamyl-tRNA(Gln) + L-glutamine + ATP + H2O = L-glutaminyl-tRNA(Gln) + L-glutamate + ADP + phosphate + H(+). The catalysed reaction is L-aspartyl-tRNA(Asn) + L-glutamine + ATP + H2O = L-asparaginyl-tRNA(Asn) + L-glutamate + ADP + phosphate + 2 H(+). Its function is as follows. Allows the formation of correctly charged Asn-tRNA(Asn) or Gln-tRNA(Gln) through the transamidation of misacylated Asp-tRNA(Asn) or Glu-tRNA(Gln) in organisms which lack either or both of asparaginyl-tRNA or glutaminyl-tRNA synthetases. The reaction takes place in the presence of glutamine and ATP through an activated phospho-Asp-tRNA(Asn) or phospho-Glu-tRNA(Gln). This chain is Aspartyl/glutamyl-tRNA(Asn/Gln) amidotransferase subunit B, found in Anaplasma phagocytophilum (strain HZ).